A 396-amino-acid polypeptide reads, in one-letter code: MTNIRITEVFTQAMPVLEKLEEAGFEAYFVGGCVRDLLLERPIHDVDIATSAYPEEVKETFAKSIDTGILHGTVTVLYGGSSYEITTFRTESGYQDFRRPDKVTFVQNLDEDLKRRDFTINALAMNRQGEIIDLFDGLGDLKRRVIKAVGVAEDRFHEDALRMMRAVRFMSQLSFSLEEKTRQAIINNHELLSKISVERIREEFVKLALGKDSRQAFKDFLATGLSEECPGLAGKKDQLSVLTDLKAGPDDEAVFWSLIAVLINLPADKISPFMRAWKNSNAMNQQVRQIVAAFDLLSRGEESDFDLFEIGQENLEAALKLAGLLGKPLSSQVLLDRYNRLPIKAAGELAIDGQWLIKEGIKPSPELGQLLRKALEGVVSGQVENSQAAIAEFLAI.

ATP-binding residues include Gly32 and Arg35. CTP-binding residues include Gly32 and Arg35. 2 residues coordinate Mg(2+): Asp45 and Asp47. Residues Arg116, Asp159, Arg162, Arg165, and Arg168 each contribute to the ATP site. CTP-binding residues include Arg116, Asp159, Arg162, Arg165, and Arg168.

Belongs to the tRNA nucleotidyltransferase/poly(A) polymerase family. Bacterial CCA-adding enzyme type 3 subfamily. As to quaternary structure, homodimer. The cofactor is Mg(2+).

The catalysed reaction is a tRNA precursor + 2 CTP + ATP = a tRNA with a 3' CCA end + 3 diphosphate. It catalyses the reaction a tRNA with a 3' CCA end + 2 CTP + ATP = a tRNA with a 3' CCACCA end + 3 diphosphate. In terms of biological role, catalyzes the addition and repair of the essential 3'-terminal CCA sequence in tRNAs without using a nucleic acid template. Adds these three nucleotides in the order of C, C, and A to the tRNA nucleotide-73, using CTP and ATP as substrates and producing inorganic pyrophosphate. tRNA 3'-terminal CCA addition is required both for tRNA processing and repair. Also involved in tRNA surveillance by mediating tandem CCA addition to generate a CCACCA at the 3' terminus of unstable tRNAs. While stable tRNAs receive only 3'-terminal CCA, unstable tRNAs are marked with CCACCA and rapidly degraded. The protein is CCA-adding enzyme of Lactobacillus delbrueckii subsp. bulgaricus (strain ATCC BAA-365 / Lb-18).